A 288-amino-acid polypeptide reads, in one-letter code: Fibroblast growth factor 2 (288 aa).

The disordered stretch occupies residues 1–133; it reads MVGVGGGDVE…RGSRPGPAGT (133 aa). A propeptide spans 1 to 142 (or 93, or 124, or 125, or 131, or 161); sequence MVGVGGGDVE…TMAAGSITTL (142 aa). Low complexity predominate over residues 52 to 64; it reads SVNPRSRAAGSPR. The segment covering 68–84 has biased composition (basic and acidic residues); it reads RRTEERPSGSRLGDRGR. Residues arginine 108, arginine 110, and arginine 112 each carry the omega-N-methylarginine; alternate modification. Residues arginine 108, arginine 110, and arginine 112 each carry the symmetric dimethylarginine; alternate modification. Over residues 113 to 132 the composition is skewed to low complexity; it reads GTAAPRAAPAARGSRPGPAG. Residue asparagine 169 participates in heparin binding. Positions 179–181 match the Cell attachment site; atypical motif; that stretch reads DGR. Tyrosine 215 is subject to Phosphotyrosine; by TEC. The Cell attachment site; atypical motif lies at 221 to 223; it reads DGR. Residue lysine 228 forms a Glycyl lysine isopeptide (Lys-Gly) (interchain with G-Cter in SUMO1) linkage. Residues 261 to 277 are heparin-binding; the sequence is KRTGQYKLGSKTGPGQK.

This sequence belongs to the heparin-binding growth factors family. Monomer. Homodimer. Interacts with FGFR1, FGFR2, FGFR3 and FGFR4. Affinity between fibroblast growth factors (FGFs) and their receptors is increased by heparan sulfate glycosaminoglycans that function as coreceptors. Interacts with CSPG4, FGFBP1 and TEC. Found in a complex with FGFBP1, FGF1 and FGF2. Interacts with FGFBP3. Interacts with integrin ITGAV:ITGB3; the interaction is required for FGF2 signaling. Interacts with SNORC (via the extracellular domain). Interacts with glypican GPC3. Post-translationally, phosphorylation at Tyr-215 regulates FGF2 unconventional secretion. In terms of processing, several N-termini starting at positions 94, 125, 126, 132, 143 and 162 have been identified by direct sequencing. In terms of tissue distribution, expressed in granulosa and cumulus cells. Expressed in hepatocellular carcinoma cells, but not in non-cancerous liver tissue.

Its subcellular location is the secreted. It localises to the nucleus. Functionally, acts as a ligand for FGFR1, FGFR2, FGFR3 and FGFR4. Also acts as an integrin ligand which is required for FGF2 signaling. Binds to integrin ITGAV:ITGB3. Plays an important role in the regulation of cell survival, cell division, cell differentiation and cell migration. Functions as a potent mitogen in vitro. Can induce angiogenesis. Mediates phosphorylation of ERK1/2 and thereby promotes retinal lens fiber differentiation. The sequence is that of Fibroblast growth factor 2 (FGF2) from Homo sapiens (Human).